The following is a 32-amino-acid chain: MNKLPAHLSRQNCKIASTNLSEIIPRRAAVLK.

In Escherichia coli (strain K12), this protein is Protein YthB.